Here is a 398-residue protein sequence, read N- to C-terminus: uncharacterized protein (398 aa).

Helical transmembrane passes span 43 to 65, 89 to 108, 156 to 173, 180 to 198, 224 to 246, 259 to 281, 291 to 311, 316 to 338, 351 to 373, and 380 to 397; these read PILPMLITSVGGGSLSIGLVGGL, IFVVLGYLTSSMFKLLLGLS, TAGAILGSTLSLLFILYL, IILIAAVIGFLTLIPLYFV, LFILISAIFTLSNFSYMFYILRA, IIIPIALYILYNIFYATFSIPFG, SVLTIGYIVYGIVSLGFAYFI, LILLFALYGIAYALFAGNQKAYV, LGLFYTVVGLTSLPASLIAGYLW, and TFLYGSVLAIISGLLLLF.

The protein belongs to the major facilitator superfamily.

The protein resides in the cell membrane. This is an uncharacterized protein from Methanocaldococcus jannaschii (strain ATCC 43067 / DSM 2661 / JAL-1 / JCM 10045 / NBRC 100440) (Methanococcus jannaschii).